The primary structure comprises 285 residues: ATP phosphoribosyltransferase (285 aa).

This sequence belongs to the ATP phosphoribosyltransferase family. Long subfamily. Mg(2+) is required as a cofactor.

It is found in the cytoplasm. It carries out the reaction 1-(5-phospho-beta-D-ribosyl)-ATP + diphosphate = 5-phospho-alpha-D-ribose 1-diphosphate + ATP. It functions in the pathway amino-acid biosynthesis; L-histidine biosynthesis; L-histidine from 5-phospho-alpha-D-ribose 1-diphosphate: step 1/9. Feedback inhibited by histidine. Functionally, catalyzes the condensation of ATP and 5-phosphoribose 1-diphosphate to form N'-(5'-phosphoribosyl)-ATP (PR-ATP). Has a crucial role in the pathway because the rate of histidine biosynthesis seems to be controlled primarily by regulation of HisG enzymatic activity. The chain is ATP phosphoribosyltransferase from Streptomyces coelicolor (strain ATCC BAA-471 / A3(2) / M145).